A 290-amino-acid polypeptide reads, in one-letter code: Undecaprenyl-diphosphatase (290 aa).

8 consecutive transmembrane segments (helical) span residues 1–21 (MALW…FLPV), 49–69 (MILF…VVFW), 101–121 (LFWL…TLKA), 126–146 (VFAS…LLWW), 160–180 (INLK…MPGL), 203–223 (YSFF…AIEV), 232–252 (VGFS…IISL), and 266–286 (VFSF…IDLA).

It belongs to the UppP family.

Its subcellular location is the cell inner membrane. It carries out the reaction di-trans,octa-cis-undecaprenyl diphosphate + H2O = di-trans,octa-cis-undecaprenyl phosphate + phosphate + H(+). Functionally, catalyzes the dephosphorylation of undecaprenyl diphosphate (UPP). Confers resistance to bacitracin. This chain is Undecaprenyl-diphosphatase, found in Alkalilimnicola ehrlichii (strain ATCC BAA-1101 / DSM 17681 / MLHE-1).